The chain runs to 334 residues: Fructose-1,6-bisphosphatase class 1 (334 aa).

Mg(2+)-binding residues include Glu91, Asp113, Leu115, and Asp116. Substrate contacts are provided by residues 116–119, Asn208, and Lys274; that span reads DGSS. Position 280 (Glu280) interacts with Mg(2+).

It belongs to the FBPase class 1 family. Homotetramer. The cofactor is Mg(2+).

Its subcellular location is the cytoplasm. It carries out the reaction beta-D-fructose 1,6-bisphosphate + H2O = beta-D-fructose 6-phosphate + phosphate. It functions in the pathway carbohydrate biosynthesis; gluconeogenesis. In Janthinobacterium sp. (strain Marseille) (Minibacterium massiliensis), this protein is Fructose-1,6-bisphosphatase class 1.